Consider the following 517-residue polypeptide: Probable cytosol aminopeptidase (517 aa).

Mn(2+) contacts are provided by K279 and D284. Residue K291 is part of the active site. Residues D302, D361, and E363 each contribute to the Mn(2+) site. R365 is an active-site residue.

Belongs to the peptidase M17 family. Mn(2+) is required as a cofactor.

It is found in the cytoplasm. The enzyme catalyses Release of an N-terminal amino acid, Xaa-|-Yaa-, in which Xaa is preferably Leu, but may be other amino acids including Pro although not Arg or Lys, and Yaa may be Pro. Amino acid amides and methyl esters are also readily hydrolyzed, but rates on arylamides are exceedingly low.. It catalyses the reaction Release of an N-terminal amino acid, preferentially leucine, but not glutamic or aspartic acids.. In terms of biological role, presumably involved in the processing and regular turnover of intracellular proteins. Catalyzes the removal of unsubstituted N-terminal amino acids from various peptides. This chain is Probable cytosol aminopeptidase, found in Streptomyces coelicolor (strain ATCC BAA-471 / A3(2) / M145).